The chain runs to 1076 residues: Carbamoyl phosphate synthase large chain (1076 aa).

Positions 1-403 (MPKRTDIQSI…SLQKALRGLE (403 aa)) are carboxyphosphate synthetic domain. ATP-binding residues include arginine 129, arginine 169, glycine 175, glycine 176, glutamate 208, leucine 210, glutamate 215, glycine 241, valine 242, histidine 243, glutamine 285, and glutamate 299. Residues 133–328 (DQAMKRIGLE…IAKIAAKLAV (196 aa)) form the ATP-grasp 1 domain. The Mg(2+) site is built by glutamine 285, glutamate 299, and asparagine 301. Glutamine 285, glutamate 299, and asparagine 301 together coordinate Mn(2+). Residues 404 to 553 (TGNDGLDPKV…YSSYEEECEA (150 aa)) form an oligomerization domain region. The segment at 554 to 935 (EVSDRPKIMV…AFYKAQLGAG (382 aa)) is carbamoyl phosphate synthetic domain. In terms of domain architecture, ATP-grasp 2 spans 678–869 (QHMVDKLGLK…LAQVAARCMA (192 aa)). ATP-binding residues include arginine 714, histidine 753, leucine 755, glutamate 760, glycine 785, valine 786, histidine 787, serine 788, glutamine 828, and glutamate 840. Residues glutamine 828, glutamate 840, and asparagine 842 each coordinate Mg(2+). Mn(2+)-binding residues include glutamine 828, glutamate 840, and asparagine 842. In terms of domain architecture, MGS-like spans 936–1076 (EAIPALEGER…LQELHAGVSQ (141 aa)). Residues 936–1076 (EAIPALEGER…LQELHAGVSQ (141 aa)) are allosteric domain.

Belongs to the CarB family. In terms of assembly, composed of two chains; the small (or glutamine) chain promotes the hydrolysis of glutamine to ammonia, which is used by the large (or ammonia) chain to synthesize carbamoyl phosphate. Tetramer of heterodimers (alpha,beta)4. Mg(2+) serves as cofactor. Mn(2+) is required as a cofactor.

The catalysed reaction is hydrogencarbonate + L-glutamine + 2 ATP + H2O = carbamoyl phosphate + L-glutamate + 2 ADP + phosphate + 2 H(+). The enzyme catalyses hydrogencarbonate + NH4(+) + 2 ATP = carbamoyl phosphate + 2 ADP + phosphate + 2 H(+). It participates in amino-acid biosynthesis; L-arginine biosynthesis; carbamoyl phosphate from bicarbonate: step 1/1. It functions in the pathway pyrimidine metabolism; UMP biosynthesis via de novo pathway; (S)-dihydroorotate from bicarbonate: step 1/3. Functionally, large subunit of the glutamine-dependent carbamoyl phosphate synthetase (CPSase). CPSase catalyzes the formation of carbamoyl phosphate from the ammonia moiety of glutamine, carbonate, and phosphate donated by ATP, constituting the first step of 2 biosynthetic pathways, one leading to arginine and/or urea and the other to pyrimidine nucleotides. The large subunit (synthetase) binds the substrates ammonia (free or transferred from glutamine from the small subunit), hydrogencarbonate and ATP and carries out an ATP-coupled ligase reaction, activating hydrogencarbonate by forming carboxy phosphate which reacts with ammonia to form carbamoyl phosphate. The sequence is that of Carbamoyl phosphate synthase large chain from Halomonas eurihalina.